A 152-amino-acid polypeptide reads, in one-letter code: MASQESLTEEQIAEFKEAFSLFDKDGDGSITTKELGTVMRSLGQNPTEAELQDMINEVDADGNGNIDFPEFLTMMARKMQDTDTEEEIREAFKVFDKDGNGYISAAELRHVMTSLGEKLTNEEVDEMIREADLDGDGQVNYDEFVKMMIVRN.

Ala-2 bears the N-acetylalanine mark. EF-hand domains lie at 10–45, 46–81, 83–118, and 119–152; these read EQIA…LGQN, PTEA…KMQD, DTEE…LGEK, and LTNE…IVRN. Ca(2+) contacts are provided by Asp-23, Asp-25, Asp-27, Ser-29, Glu-34, Asp-59, Asp-61, Asn-63, Asn-65, Glu-70, Asp-96, Asp-98, Asn-100, Tyr-102, Glu-107, Asp-132, Asp-134, Asp-136, Gln-138, and Glu-143.

The protein belongs to the calmodulin family. In terms of assembly, interacts with cmbB, numA/nucleomorphin, pgkA/phosphoglycerate kinase, and thyB/thymidine kinase in the presence of Ca(2+). Interacts with dwwA in the absence of Ca(2+). Post-translationally, the N-terminus is blocked. Trimethylation of Lys-118 observed in other calmodulins is absent here.

The protein localises to the contractile vacuole. Calmodulin mediates the control of a large number of enzymes, ion channels and other proteins by Ca(2+). Among the enzymes to be stimulated by the calmodulin-Ca(2+) complex are a number of protein kinases and phosphatases. In Dictyostelium discoideum (Social amoeba), this protein is Calmodulin (calA).